Here is a 207-residue protein sequence, read N- to C-terminus: MKVQIIFYSMYGHIFRMAEAVAEGARSVAGAEVGLFRVPELVPDEVLEKSGAKTAQQAFAHVPVAKTEQLPEADAIIFGTPTRFGNMCAQMRNFLDQTGGLWMKGSLVGKVGSVFTSTATQHGGQESTILSTHITLLHQGMVLVGLPYTEKRQMGMDEILGGSPYGAATIAGGDGSRMPSQTEIEMAKFQGRHVAEIASALVRGRAA.

Positions 3-194 constitute a Flavodoxin-like domain; sequence VQIIFYSMYG…EMAKFQGRHV (192 aa). FMN-binding positions include 9–14 and 82–84; these read SMYGHI and TRF. Tyrosine 11 provides a ligand contact to NAD(+). Tryptophan 102 contributes to the substrate binding site. FMN is bound by residues 117–123 and histidine 138; that span reads STATQHG.

This sequence belongs to the WrbA family. It depends on FMN as a cofactor.

The enzyme catalyses a quinone + NADH + H(+) = a quinol + NAD(+). The catalysed reaction is a quinone + NADPH + H(+) = a quinol + NADP(+). The polypeptide is NAD(P)H dehydrogenase (quinone) (Aromatoleum aromaticum (strain DSM 19018 / LMG 30748 / EbN1) (Azoarcus sp. (strain EbN1))).